Here is a 241-residue protein sequence, read N- to C-terminus: tRNA (guanine-N(7)-)-methyltransferase (241 aa).

Glutamate 71, glutamate 96, aspartate 123, and aspartate 146 together coordinate S-adenosyl-L-methionine. Aspartate 146 is an active-site residue. Residues lysine 150, aspartate 182, and 219–222 each bind substrate; that span reads TKFE.

The protein belongs to the class I-like SAM-binding methyltransferase superfamily. TrmB family.

The catalysed reaction is guanosine(46) in tRNA + S-adenosyl-L-methionine = N(7)-methylguanosine(46) in tRNA + S-adenosyl-L-homocysteine. It functions in the pathway tRNA modification; N(7)-methylguanine-tRNA biosynthesis. Catalyzes the formation of N(7)-methylguanine at position 46 (m7G46) in tRNA. In Pseudoalteromonas translucida (strain TAC 125), this protein is tRNA (guanine-N(7)-)-methyltransferase.